The primary structure comprises 228 residues: 7-cyano-7-deazaguanine synthase (228 aa).

ATP is bound at residue 9-19; sequence LSGGPDSTTVL. Zn(2+) is bound by residues Cys-193, Cys-203, Cys-206, and Cys-209.

Belongs to the QueC family. The cofactor is Zn(2+).

It catalyses the reaction 7-carboxy-7-deazaguanine + NH4(+) + ATP = 7-cyano-7-deazaguanine + ADP + phosphate + H2O + H(+). It participates in purine metabolism; 7-cyano-7-deazaguanine biosynthesis. Its function is as follows. Catalyzes the ATP-dependent conversion of 7-carboxy-7-deazaguanine (CDG) to 7-cyano-7-deazaguanine (preQ(0)). The chain is 7-cyano-7-deazaguanine synthase from Rickettsia africae (strain ESF-5).